The sequence spans 194 residues: Probable GTP-binding protein EngB (194 aa).

Residues 22-194 (PLPEVALAGR…AWKAILHAIS (173 aa)) form the EngB-type G domain. GTP-binding positions include 30-37 (GRSNVGKS), 57-61 (GKTQT), 75-78 (DVPG), 142-145 (TKCD), and 174-176 (FSS). Mg(2+) contacts are provided by Ser37 and Thr59.

It belongs to the TRAFAC class TrmE-Era-EngA-EngB-Septin-like GTPase superfamily. EngB GTPase family. Requires Mg(2+) as cofactor.

Functionally, necessary for normal cell division and for the maintenance of normal septation. The polypeptide is Probable GTP-binding protein EngB (Halalkalibacterium halodurans (strain ATCC BAA-125 / DSM 18197 / FERM 7344 / JCM 9153 / C-125) (Bacillus halodurans)).